Consider the following 475-residue polypeptide: Aspartyl/glutamyl-tRNA(Asn/Gln) amidotransferase subunit B (475 aa).

It belongs to the GatB/GatE family. GatB subfamily. In terms of assembly, heterotrimer of A, B and C subunits.

The catalysed reaction is L-glutamyl-tRNA(Gln) + L-glutamine + ATP + H2O = L-glutaminyl-tRNA(Gln) + L-glutamate + ADP + phosphate + H(+). The enzyme catalyses L-aspartyl-tRNA(Asn) + L-glutamine + ATP + H2O = L-asparaginyl-tRNA(Asn) + L-glutamate + ADP + phosphate + 2 H(+). Its function is as follows. Allows the formation of correctly charged Asn-tRNA(Asn) or Gln-tRNA(Gln) through the transamidation of misacylated Asp-tRNA(Asn) or Glu-tRNA(Gln) in organisms which lack either or both of asparaginyl-tRNA or glutaminyl-tRNA synthetases. The reaction takes place in the presence of glutamine and ATP through an activated phospho-Asp-tRNA(Asn) or phospho-Glu-tRNA(Gln). This chain is Aspartyl/glutamyl-tRNA(Asn/Gln) amidotransferase subunit B, found in Chlorobaculum tepidum (strain ATCC 49652 / DSM 12025 / NBRC 103806 / TLS) (Chlorobium tepidum).